Consider the following 206-residue polypeptide: Small ribosomal subunit protein uS4 (206 aa).

The S4 RNA-binding domain occupies 96–156; the sequence is GRLDNVVYRM…EKAKKQSRVK (61 aa).

The protein belongs to the universal ribosomal protein uS4 family. Part of the 30S ribosomal subunit. Contacts protein S5. The interaction surface between S4 and S5 is involved in control of translational fidelity.

In terms of biological role, one of the primary rRNA binding proteins, it binds directly to 16S rRNA where it nucleates assembly of the body of the 30S subunit. With S5 and S12 plays an important role in translational accuracy. This chain is Small ribosomal subunit protein uS4, found in Shigella flexneri.